Reading from the N-terminus, the 80-residue chain is Cytochrome c oxidase subunit 7B, mitochondrial (80 aa).

A mitochondrion-targeting transit peptide spans 1-24 (MFPLVKNALNRLQVRSIQQTMARQ). Over 25–32 (SHQKRTPD) the chain is Mitochondrial matrix. A helical transmembrane segment spans residues 33–59 (FHDKYGNAVLASGATFCIVTWTYVATQ). Residues 60-80 (VGIEWNLSPVGRVTPKEWRNQ) lie on the Mitochondrial intermembrane side of the membrane.

This sequence belongs to the cytochrome c oxidase VIIb family. As to quaternary structure, component of the cytochrome c oxidase (complex IV, CIV), a multisubunit enzyme composed of 14 subunits. The complex is composed of a catalytic core of 3 subunits MT-CO1, MT-CO2 and MT-CO3, encoded in the mitochondrial DNA, and 11 supernumerary subunits COX4I, COX5A, COX5B, COX6A, COX6B, COX6C, COX7A, COX7B, COX7C, COX8 and NDUFA4, which are encoded in the nuclear genome. The complex exists as a monomer or a dimer and forms supercomplexes (SCs) in the inner mitochondrial membrane with NADH-ubiquinone oxidoreductase (complex I, CI) and ubiquinol-cytochrome c oxidoreductase (cytochrome b-c1 complex, complex III, CIII), resulting in different assemblies (supercomplex SCI(1)III(2)IV(1) and megacomplex MCI(2)III(2)IV(2)).

It localises to the mitochondrion inner membrane. The protein operates within energy metabolism; oxidative phosphorylation. In terms of biological role, component of the cytochrome c oxidase, the last enzyme in the mitochondrial electron transport chain which drives oxidative phosphorylation. The respiratory chain contains 3 multisubunit complexes succinate dehydrogenase (complex II, CII), ubiquinol-cytochrome c oxidoreductase (cytochrome b-c1 complex, complex III, CIII) and cytochrome c oxidase (complex IV, CIV), that cooperate to transfer electrons derived from NADH and succinate to molecular oxygen, creating an electrochemical gradient over the inner membrane that drives transmembrane transport and the ATP synthase. Cytochrome c oxidase is the component of the respiratory chain that catalyzes the reduction of oxygen to water. Electrons originating from reduced cytochrome c in the intermembrane space (IMS) are transferred via the dinuclear copper A center (CU(A)) of subunit 2 and heme A of subunit 1 to the active site in subunit 1, a binuclear center (BNC) formed by heme A3 and copper B (CU(B)). The BNC reduces molecular oxygen to 2 water molecules using 4 electrons from cytochrome c in the IMS and 4 protons from the mitochondrial matrix. Plays a role in proper central nervous system (CNS) development in vertebrates. This Pongo abelii (Sumatran orangutan) protein is Cytochrome c oxidase subunit 7B, mitochondrial (COX7B).